A 208-amino-acid polypeptide reads, in one-letter code: Putative archaetidylserine decarboxylase proenzyme (208 aa).

S171 serves as the catalytic Schiff-base intermediate with substrate; via pyruvic acid. S171 is modified (pyruvic acid (Ser); by autocatalysis).

Belongs to the phosphatidylserine decarboxylase family. PSD-A subfamily. As to quaternary structure, heterodimer of a large membrane-associated beta subunit and a small pyruvoyl-containing alpha subunit. Requires pyruvate as cofactor. In terms of processing, is synthesized initially as an inactive proenzyme. Formation of the active enzyme involves a self-maturation process in which the active site pyruvoyl group is generated from an internal serine residue via an autocatalytic post-translational modification. Two non-identical subunits are generated from the proenzyme in this reaction, and the pyruvate is formed at the N-terminus of the alpha chain, which is derived from the carboxyl end of the proenzyme. The post-translation cleavage follows an unusual pathway, termed non-hydrolytic serinolysis, in which the side chain hydroxyl group of the serine supplies its oxygen atom to form the C-terminus of the beta chain, while the remainder of the serine residue undergoes an oxidative deamination to produce ammonia and the pyruvoyl prosthetic group on the alpha chain.

The protein localises to the cell membrane. The catalysed reaction is archaetidylserine + H(+) = archaetidylethanolamine + CO2. Its function is as follows. Catalyzes the formation of archaetidylethanolamine (PtdEtn) from archaetidylserine (PtdSer). This is Putative archaetidylserine decarboxylase proenzyme from Methanococcoides burtonii (strain DSM 6242 / NBRC 107633 / OCM 468 / ACE-M).